The primary structure comprises 207 residues: Imidazole glycerol phosphate synthase subunit HisH (207 aa).

A Glutamine amidotransferase type-1 domain is found at 1 to 207 (MIGIIDYGMG…KRFGQLVEGN (207 aa)). The Nucleophile role is filled by C79. Catalysis depends on residues H185 and E187.

As to quaternary structure, heterodimer of HisH and HisF.

The protein resides in the cytoplasm. It carries out the reaction 5-[(5-phospho-1-deoxy-D-ribulos-1-ylimino)methylamino]-1-(5-phospho-beta-D-ribosyl)imidazole-4-carboxamide + L-glutamine = D-erythro-1-(imidazol-4-yl)glycerol 3-phosphate + 5-amino-1-(5-phospho-beta-D-ribosyl)imidazole-4-carboxamide + L-glutamate + H(+). The catalysed reaction is L-glutamine + H2O = L-glutamate + NH4(+). The protein operates within amino-acid biosynthesis; L-histidine biosynthesis; L-histidine from 5-phospho-alpha-D-ribose 1-diphosphate: step 5/9. IGPS catalyzes the conversion of PRFAR and glutamine to IGP, AICAR and glutamate. The HisH subunit catalyzes the hydrolysis of glutamine to glutamate and ammonia as part of the synthesis of IGP and AICAR. The resulting ammonia molecule is channeled to the active site of HisF. This chain is Imidazole glycerol phosphate synthase subunit HisH, found in Shouchella clausii (strain KSM-K16) (Alkalihalobacillus clausii).